A 230-amino-acid chain; its full sequence is Protein CWC15 homolog B (230 aa).

The interval 1–126 is disordered; the sequence is MTTAARPTFE…DEDSDDDTAA (126 aa). Residues 22-34 are compositionally biased toward polar residues; the sequence is DLSQLSKQYSSRD. Over residues 52 to 84 the composition is skewed to basic and acidic residues; that stretch reads EEVRSRDFRRELEERERVAVRDKNRDRPTREHT. The segment covering 102–124 has biased composition (acidic residues); the sequence is DADDPLTDEDADEDSDEDSDDDT. The stretch at 121–165 forms a coiled coil; that stretch reads DDDTAALLAELEKIKKERAEEQVRKELEQKAEEERIRMENILSGN.

It belongs to the CWC15 family. In terms of assembly, identified in the spliceosome C complex. Component of the minor spliceosome, which splices U12-type introns.

Its subcellular location is the nucleus. In terms of biological role, involved in pre-mRNA splicing as component of the spliceosome. The polypeptide is Protein CWC15 homolog B (cwc15-b) (Xenopus laevis (African clawed frog)).